Reading from the N-terminus, the 404-residue chain is Multidrug resistance protein MdtG (404 aa).

Helical transmembrane passes span 19–39 (LGCF…PLYV), 56–76 (LVFS…GGLA), 90–110 (LGMA…QFLI), 113–133 (ALLG…ATQV), 144–164 (TLST…GLLA), 171–191 (PVFF…FFFI), 222–242 (LFVT…ILTL), 254–274 (IAFI…LSAP), 288–308 (ILIV…FVQT), 317–337 (FLLG…LVYN), and 376–396 (AVFC…WNSL).

This sequence belongs to the major facilitator superfamily. DHA1 family. MdtG (TC 2.A.1.2.20) subfamily.

It is found in the cell inner membrane. The sequence is that of Multidrug resistance protein MdtG from Salmonella heidelberg (strain SL476).